The sequence spans 167 residues: Peptide deformylase (167 aa).

Residues cysteine 91 and histidine 133 each contribute to the Fe cation site. Glutamate 134 is a catalytic residue. Fe cation is bound at residue histidine 137.

It belongs to the polypeptide deformylase family. Fe(2+) serves as cofactor.

The enzyme catalyses N-terminal N-formyl-L-methionyl-[peptide] + H2O = N-terminal L-methionyl-[peptide] + formate. In terms of biological role, removes the formyl group from the N-terminal Met of newly synthesized proteins. Requires at least a dipeptide for an efficient rate of reaction. N-terminal L-methionine is a prerequisite for activity but the enzyme has broad specificity at other positions. The sequence is that of Peptide deformylase from Baumannia cicadellinicola subsp. Homalodisca coagulata.